The chain runs to 99 residues: UPF0213 protein YazA (99 aa).

Residues 4–79 enclose the GIY-YIG domain; sequence NNHFFYVVKC…KKLTRKKKEL (76 aa).

The protein belongs to the UPF0213 family.

The protein is UPF0213 protein YazA (yazA) of Bacillus subtilis (strain 168).